The chain runs to 179 residues: Tegument protein UL55 homolog (179 aa).

The protein belongs to the alphaherpesvirinae HHV-1 UL55 family.

The protein resides in the virion tegument. The protein localises to the host nucleus matrix. This is Tegument protein UL55 homolog from Homo sapiens (Human).